A 163-amino-acid polypeptide reads, in one-letter code: Sperm surface protein Sp17 (163 aa).

Disordered stretches follow at residues 57–115 and 129–163; these read PAEW…EKEE and VARE…THEK. Basic and acidic residues-rich tracts occupy residues 62-98 and 129-139; these read SKVE…KEEE and VAREEVKKMKT. In terms of domain architecture, IQ spans 114-143; the sequence is EEVAAVKIQAAFRGHVAREEVKKMKTDSLQ. The span at 153–163 shows a compositional bias: polar residues; the sequence is DTGFTSRTHEK.

As to quaternary structure, homodimer. May interact with ROPN1. As to expression, testis- and sperm-specific.

The protein localises to the membrane. Its function is as follows. Sperm surface zona pellucida binding protein. Helps to bind spermatozoa to the zona pellucida with high affinity. Might function in binding zona pellucida and carbohydrates. In Papio hamadryas (Hamadryas baboon), this protein is Sperm surface protein Sp17 (SPA17).